We begin with the raw amino-acid sequence, 1041 residues long: Integrator complex subunit 3 (1041 aa).

Methionine 1 carries the post-translational modification N-acetylmethionine. Residues serine 500, serine 535, and serine 993 each carry the phosphoserine modification. The interval 975 to 1041 (YEDSSTKPPK…GSSAVGSDSD (67 aa)) is disordered. Residues 1006–1020 (AEEESGSSSASEEED) show a composition bias toward acidic residues.

Belongs to the Integrator subunit 3 family. As to quaternary structure, component of the Integrator complex, composed of core subunits INTS1, INTS2, INTS3, INTS4, INTS5, INTS6, INTS7, INTS8, INTS9/RC74, INTS10, INTS11/CPSF3L, INTS12, INTS13, INTS14 and INTS15. The core complex associates with protein phosphatase 2A subunits PPP2CA and PPP2R1A, to form the Integrator-PP2A (INTAC) complex. Component of the SOSS complex, composed of SOSS-B (SOSS-B1/NABP2 or SOSS-B2/NABP1), SOSS-A/INTS3 and SOSS-C/INIP. SOSS complexes containing SOSS-B1/NABP2 are more abundant than complexes containing SOSS-B2/NABP1. Interacts with SOSS-B1/NABP2, SOSS-B2/NABP1 and SOSS-C/INIP; the interaction is direct. Interacts with NBN/NBS1.

The protein resides in the nucleus. It localises to the cytoplasm. Functionally, component of the integrator complex, a multiprotein complex that terminates RNA polymerase II (Pol II) transcription in the promoter-proximal region of genes. The integrator complex provides a quality checkpoint during transcription elongation by driving premature transcription termination of transcripts that are unfavorably configured for transcriptional elongation: the complex terminates transcription by (1) catalyzing dephosphorylation of the C-terminal domain (CTD) of Pol II subunit POLR2A/RPB1 and SUPT5H/SPT5, (2) degrading the exiting nascent RNA transcript via endonuclease activity and (3) promoting the release of Pol II from bound DNA. The integrator complex is also involved in terminating the synthesis of non-coding Pol II transcripts, such as enhancer RNAs (eRNAs), small nuclear RNAs (snRNAs), telomerase RNAs and long non-coding RNAs (lncRNAs). Within the integrator complex, INTS3 is involved in the post-termination step: INTS3 binds INTS7 in the open conformation of integrator complex and prevents the rebinding of Pol II to the integrator after termination cycle. Mediates recruitment of cytoplasmic dynein to the nuclear envelope, probably as component of the integrator complex. Its function is as follows. Component of the SOSS complex, a multiprotein complex that functions downstream of the MRN complex to promote DNA repair and G2/M checkpoint. The SOSS complex associates with single-stranded DNA at DNA lesions and influences diverse endpoints in the cellular DNA damage response including cell-cycle checkpoint activation, recombinational repair and maintenance of genomic stability. The SOSS complex is required for efficient homologous recombination-dependent repair of double-strand breaks (DSBs) and ATM-dependent signaling pathways. In the SOSS complex, it is required for the assembly of the complex and for stabilization of the complex at DNA damage sites. The chain is Integrator complex subunit 3 (Ints3) from Mus musculus (Mouse).